The sequence spans 412 residues: Phosphoglycerate kinase (412 aa).

Substrate is bound by residues 22–24 (DFN), Arg-37, 60–63 (HLGK), Arg-120, and Arg-172. ATP contacts are provided by residues Lys-223, Gly-310, Glu-341, and 368–371 (GGDS).

The protein belongs to the phosphoglycerate kinase family. In terms of assembly, monomer.

It is found in the cytoplasm. It catalyses the reaction (2R)-3-phosphoglycerate + ATP = (2R)-3-phospho-glyceroyl phosphate + ADP. It functions in the pathway carbohydrate degradation; glycolysis; pyruvate from D-glyceraldehyde 3-phosphate: step 2/5. This Spiroplasma citri protein is Phosphoglycerate kinase.